Reading from the N-terminus, the 627-residue chain is Threonine--tRNA ligase (627 aa).

The segment at 221–523 (DHRKLGRELG…LIEHFAGDFP (303 aa)) is catalytic. Residues Cys-319, His-370, and His-500 each contribute to the Zn(2+) site.

The protein belongs to the class-II aminoacyl-tRNA synthetase family. Homodimer. Zn(2+) serves as cofactor.

It localises to the cytoplasm. It catalyses the reaction tRNA(Thr) + L-threonine + ATP = L-threonyl-tRNA(Thr) + AMP + diphosphate + H(+). Functionally, catalyzes the attachment of threonine to tRNA(Thr) in a two-step reaction: L-threonine is first activated by ATP to form Thr-AMP and then transferred to the acceptor end of tRNA(Thr). Also edits incorrectly charged L-seryl-tRNA(Thr). The sequence is that of Threonine--tRNA ligase from Gloeobacter violaceus (strain ATCC 29082 / PCC 7421).